A 158-amino-acid chain; its full sequence is Protein E6 (158 aa).

Zinc fingers lie at residues 32–68 (CVYC…CQSC) and 105–141 (CMCC…CRHC). The PDZ-binding domain motif lies at 156–158 (TQV).

This sequence belongs to the papillomaviridae E6 protein family. Forms homodimers. Interacts with ubiquitin-protein ligase UBE3A/E6-AP; this interaction stimulates UBE3A ubiquitin activity. Interacts with host BAK1.

It is found in the host cytoplasm. It localises to the host nucleus. Its function is as follows. Plays a major role in the induction and maintenance of cellular transformation. E6 associates with host UBE3A/E6-AP ubiquitin-protein ligase and modulates its activity. Protects host keratinocytes from apoptosis by mediating the degradation of host BAK1. May also inhibit host immune response. In Homo sapiens (Human), this protein is Protein E6.